The sequence spans 204 residues: MLKKIALTLCPAIVGSLLFFTAPASAHVSVKPAESAAGSWETYTMKVPSEKNLPTTKVVLKMPKDVEFQQYEPIPGWKVSTQKHDDKSVSVTWEATDGGIQEGQFQQFTFVAKNPDKAEEAAWDAYQYYKDGSIVEWTGDEDADTPHSITNITSAKQVTDEHGATKTEDDSENSGSSALDITAMVLSAAAIILSVAALVKKKRA.

An N-terminal signal peptide occupies residues 1 to 26 (MLKKIALTLCPAIVGSLLFFTAPASA). Positions 27 and 50 each coordinate Cu(2+). Residues 27-178 (HVSVKPAESA…DDSENSGSSA (152 aa)) are Extracellular-facing. Residues 146 to 176 (PHSITNITSAKQVTDEHGATKTEDDSENSGS) are disordered. The segment covering 147–157 (HSITNITSAKQ) has biased composition (polar residues). Over residues 158 to 168 (VTDEHGATKTE) the composition is skewed to basic and acidic residues. Residues 179 to 199 (LDITAMVLSAAAIILSVAALV) form a helical membrane-spanning segment. The Cytoplasmic segment spans residues 200-204 (KKKRA).

It localises to the cell membrane. Copper-binding protein that probably plays a role in copper homeostasis. May act as metallochaperone, possibly to facilitate copper uptake via the CutJ/YcnJ importer. Preferentially binds Cu in its oxidized Cu(II) state in a 1:1 stoichiometry. This Bacillus subtilis (strain 168) protein is Copper-binding protein CutI.